The chain runs to 446 residues: Tubulin beta chain (446 aa).

Positions 11, 69, 138, 142, 143, 144, 204, and 226 each coordinate GTP. Position 69 (glutamate 69) interacts with Mg(2+). The interval 422–446 (YQQYQDAGIDEEEEEYEEELPEGEE) is disordered. Residues 429 to 446 (GIDEEEEEYEEELPEGEE) are compositionally biased toward acidic residues.

The protein belongs to the tubulin family. As to quaternary structure, dimer of alpha and beta chains. A typical microtubule is a hollow water-filled tube with an outer diameter of 25 nm and an inner diameter of 15 nM. Alpha-beta heterodimers associate head-to-tail to form protofilaments running lengthwise along the microtubule wall with the beta-tubulin subunit facing the microtubule plus end conferring a structural polarity. Microtubules usually have 13 protofilaments but different protofilament numbers can be found in some organisms and specialized cells. It depends on Mg(2+) as a cofactor.

The protein resides in the cytoplasm. It localises to the cytoskeleton. In terms of biological role, tubulin is the major constituent of microtubules, a cylinder consisting of laterally associated linear protofilaments composed of alpha- and beta-tubulin heterodimers. Microtubules grow by the addition of GTP-tubulin dimers to the microtubule end, where a stabilizing cap forms. Below the cap, tubulin dimers are in GDP-bound state, owing to GTPase activity of alpha-tubulin. This chain is Tubulin beta chain (TUB2), found in Gibberella zeae (strain ATCC MYA-4620 / CBS 123657 / FGSC 9075 / NRRL 31084 / PH-1) (Wheat head blight fungus).